Consider the following 500-residue polypeptide: MSDLKTESQDLQQEENTLIALRKEKLAAEREKGQAFPNDFRRDSYCNDLQKQYVDKTKEELEAAAIPVKVAGRIMLNRGSFMVIQDMTGRIQVYVNRKTLPEETLAAVKTWDLGDIIAAEGTLARSGKGDLYVEMTNVRLLTKSLRPLPDKHHGLTDTEQRYRQRYVDLMVNEETRHTFRVRSQVISHIRKFLIDRDFLEVETPMLQTIPGGAAAKPFETHHNALDMAMFLRIAPELYLKRLVVGGFEKVFEINRNFRNEGVSTRHNPEFTMLEFYQAYADYRDNMDLTEELFRELAQLVLGSTDVPYGDKVFHFGEPFVRLSVFDSILKYNPELTAADLQDVDRARDIAKKAGAKVLGHEGLGKLQVMIFEELVEHKLEQPHFITEYPFEVSPLARRNDDNPAVTDRFELFIGGREIANAYSELNDAEDQAERFLAQVAEKDAGDDEAMHYDADFVRALEYGMPPTAGEGIGIDRLVMLLTNSPSIRDVILFPHMRPQA.

2 residues coordinate Mg(2+): glutamate 410 and glutamate 417.

Belongs to the class-II aminoacyl-tRNA synthetase family. In terms of assembly, homodimer. It depends on Mg(2+) as a cofactor.

Its subcellular location is the cytoplasm. The enzyme catalyses tRNA(Lys) + L-lysine + ATP = L-lysyl-tRNA(Lys) + AMP + diphosphate. This chain is Lysine--tRNA ligase, found in Pseudomonas putida (strain W619).